Consider the following 62-residue polypeptide: Conotoxin Qc5.2 (62 aa).

The signal sequence occupies residues 1–22 (MRCVPVFIILLLLSPSAPSVDA). A propeptide spanning residues 23–48 (HPMTKDDVPQASLHDDAKRTLQVPWM) is cleaved from the precursor. Valine 60 carries the post-translational modification Valine amide.

The protein belongs to the conotoxin T superfamily. Post-translationally, contains 2 disulfide bonds that can be either 'C1-C3, C2-C4' or 'C1-C4, C2-C3', since these disulfide connectivities have been observed for conotoxins with cysteine framework V (for examples, see AC P0DQQ7 and AC P81755). In terms of tissue distribution, expressed by the venom duct.

It localises to the secreted. In Conus quercinus (Oak cone), this protein is Conotoxin Qc5.2.